The sequence spans 147 residues: Hemoglobin subunit gamma (147 aa).

The region spanning 3-147 (HFTAEEKAII…VAIALGHKYH (145 aa)) is the Globin domain. Residues His-64 and His-93 each coordinate heme b.

Belongs to the globin family. As to quaternary structure, heterotetramer of two alpha chains and two gamma chains in fetal hemoglobin (Hb F). Red blood cells.

In terms of biological role, gamma chains make up the fetal hemoglobin F, in combination with alpha chains. The polypeptide is Hemoglobin subunit gamma (HBG) (Cephalopachus bancanus (Western tarsier)).